The sequence spans 95 residues: Osteocalcin-2 (95 aa).

The signal sequence occupies residues 1–23; it reads MRTLSLLTLLALAALCLSDLTDA. The propeptide occupies 24-49; it reads KPSGPESDKAFMSKQEGNKVVNRLRR. One can recognise a Gla domain in the interval 46 to 92; the sequence is RLRRYLGASVPSPDPLEPTREQCELNPACDELSDQYGLKTAYKRIYG. Glutamate 62, glutamate 66, glutamate 69, and aspartate 75 together coordinate Ca(2+). An intrachain disulfide couples cysteine 68 to cysteine 74.

Belongs to the osteocalcin/matrix Gla protein family. Gamma-carboxyglutamate residues are formed by vitamin K dependent carboxylation by GGCX. These residues are essential for the binding of calcium. Carboxylated in a Ptprv/Esp-dependent process. Decarboxylation promotes the hormone activity. Bone.

The protein localises to the secreted. Functionally, the carboxylated form is one of the main organic components of the bone matrix, which constitutes 1-2% of the total bone protein: it acts as a negative regulator of bone formation and is required to limit bone formation without impairing bone resorption or mineralization. The carboxylated form binds strongly to apatite and calcium. The uncarboxylated form acts as a hormone secreted by osteoblasts, which regulates different cellular processes, such as energy metabolism, male fertility and brain development. Regulates of energy metabolism by acting as a hormone favoring pancreatic beta-cell proliferation, insulin secretion and sensitivity and energy expenditure. Uncarboxylated osteocalcin hormone also promotes testosterone production in the testes: acts as a ligand for G protein-coupled receptor GPRC6A at the surface of Leydig cells, initiating a signaling response that promotes the expression of enzymes required for testosterone synthesis in a CREB-dependent manner. Also acts as a regulator of brain development: osteocalcin hormone crosses the blood-brain barrier and acts as a ligand for GPR158 on neurons, initiating a signaling response that prevents neuronal apoptosis in the hippocampus, favors the synthesis of all monoamine neurotransmitters and inhibits that of gamma-aminobutyric acid (GABA). Osteocalcin also crosses the placenta during pregnancy and maternal osteocalcin is required for fetal brain development. This is Osteocalcin-2 (Bglap2) from Mus musculus (Mouse).